The following is a 637-amino-acid chain: Threonine--tRNA ligase (637 aa).

Residues 1–61 (MIKVTLKDGK…DKDCNLEILT (61 aa)) enclose the TGS domain. The catalytic stretch occupies residues 242-532 (DHRKIGKELD…LIEHYAGAFP (291 aa)). Residues Cys-333, His-384, and His-509 each coordinate Zn(2+).

Belongs to the class-II aminoacyl-tRNA synthetase family. As to quaternary structure, homodimer. It depends on Zn(2+) as a cofactor.

The protein resides in the cytoplasm. It carries out the reaction tRNA(Thr) + L-threonine + ATP = L-threonyl-tRNA(Thr) + AMP + diphosphate + H(+). Functionally, catalyzes the attachment of threonine to tRNA(Thr) in a two-step reaction: L-threonine is first activated by ATP to form Thr-AMP and then transferred to the acceptor end of tRNA(Thr). Also edits incorrectly charged L-seryl-tRNA(Thr). The chain is Threonine--tRNA ligase from Clostridium acetobutylicum (strain ATCC 824 / DSM 792 / JCM 1419 / IAM 19013 / LMG 5710 / NBRC 13948 / NRRL B-527 / VKM B-1787 / 2291 / W).